The following is a 757-amino-acid chain: Inhibitor of nuclear factor kappa-B kinase subunit beta (757 aa).

Residues 15 to 300 enclose the Protein kinase domain; sequence WEMKERLGTG…DPQYGPNGCF (286 aa). Residues 21–29 and lysine 44 each bind ATP; that span reads LGTGGFGNV. Residue aspartate 145 is the Proton acceptor of the active site. Residue lysine 163 forms a Glycyl lysine isopeptide (Lys-Gly) (interchain with G-Cter in ubiquitin) linkage. Residue serine 177 is modified to Phosphoserine; by TBK1 and PKC/PRKCZ. Cysteine 179 bears the S-nitrosocysteine mark. At serine 181 the chain carries Phosphoserine; by TBK1, PKC/PRKCZ and PDPK1. Proline 191 carries the hydroxyproline modification. A leucine-zipper region spans residues 458 to 479; it reads LLRNNSCLSKMKNAMASTAQQL. Position 670 is a phosphoserine; by autocatalysis (serine 670). Serine 672 is subject to Phosphoserine. 8 positions are modified to phosphoserine; by autocatalysis: serine 675, serine 682, serine 689, serine 692, serine 697, serine 705, serine 733, and serine 740. A disordered region spans residues 683–703; that stretch reads HPGQLMSQPSSACDSLPESDK. An NEMO-binding region spans residues 737 to 742; sequence LDWSWL.

The protein belongs to the protein kinase superfamily. Ser/Thr protein kinase family. I-kappa-B kinase subfamily. In terms of assembly, component of the I-kappa-B-kinase (IKK) core complex consisting of CHUK, IKBKB and IKBKG; probably four alpha/CHUK-beta/IKBKB dimers are associated with four gamma/IKBKG subunits. The IKK core complex seems to associate with regulatory or adapter proteins to form a IKK-signalosome holo-complex. The IKK complex associates with TERF2IP/RAP1, leading to promote IKK-mediated phosphorylation of RELA/p65. Part of a complex composed of NCOA2, NCOA3, CHUK/IKKA, IKBKB, IKBKG and CREBBP. Part of a 70-90 kDa complex at least consisting of CHUK/IKKA, IKBKB, NFKBIA, RELA, ELP1 and MAP3K14. Found in a membrane raft complex, at least composed of BCL10, CARD11, DPP4 and IKBKB. Interacts with SQSTM1 through PRKCZ or PRKCI. Forms an NGF-induced complex with IKBKB, PRKCI and TRAF6. May interact with MAVS/IPS1. Interacts with NALP2. Interacts with TICAM1. Interacts with FAF1; the interaction disrupts the IKK complex formation. Interacts with ATM. Part of a ternary complex consisting of TANK, IKBKB and IKBKG. Interacts with NIBP; the interaction is direct. Interacts with ARRB1 and ARRB2. Interacts with TRIM21. Interacts with NLRC5; prevents IKBKB phosphorylation and kinase activity. Interacts with PDPK1. Interacts with EIF2AK2/PKR. The phosphorylated form interacts with PPM1A and PPM1B. Interacts with ZNF268 isoform 2; the interaction is further increased in a TNF-alpha-dependent manner. Interacts with IKBKE. Interacts with ZC3H12A. Interacts with AKAP13. Interacts with LRRC14; disrupts IKBKB-IKBKG interaction preventing I-kappa-B-kinase (IKK) core complex formation and leading to a decrease of IKBKB phosphorylation and NF-kappaB activation. Interacts with SASH1. Interacts with ARFIP2. Interacts with FKBP5. Interacts with kinase TBK1; the complex interacts with STAT1, leading to phosphorylation of STAT1 on 'Thr-748' by IKBKB. Post-translationally, upon cytokine stimulation, phosphorylated on Ser-177 and Ser-181 by MEKK1 and/or MAP3K14/NIK as well as TBK1 and PRKCZ; which enhances activity. Phosphorylated by MAP3K7/TAK1 in response to NOD1 and NOD2 signaling, promoting activation and phosphorylation of NF-kappa-B inhibitors, leading to NF-kappa-B activation. Once activated, autophosphorylates on the C-terminal serine cluster; which decreases activity and prevents prolonged activation of the inflammatory response. Phosphorylated by the IKK-related kinases TBK1 and IKBKE, which is associated with reduced CHUK/IKKA and IKBKB activity and NF-kappa-B-dependent gene transcription. Dephosphorylated at Ser-177 and Ser-181 by PPM1A and PPM1B. In terms of processing, ubiquitinated. Monoubiquitination involves TRIM21 that leads to inhibition of Tax-induced NF-kappa-B signaling. 'Ser-163' may not serve as a monoubiquitination site. Ubiquitination on 'Ser-163' may modulate phosphorylation on C-terminal serine residues. Hydroxylated by PHD1/EGLN2, loss of hydroxylation under hypoxic conditions results in activation of NF-kappa-B. As to expression, detected in heart (at protein level). Expressed in liver, kidney and spleen.

It localises to the cytoplasm. The protein localises to the nucleus. The protein resides in the membrane raft. The catalysed reaction is L-seryl-[I-kappa-B protein] + ATP = O-phospho-L-seryl-[I-kappa-B protein] + ADP + H(+). The enzyme catalyses L-seryl-[protein] + ATP = O-phospho-L-seryl-[protein] + ADP + H(+). It catalyses the reaction L-threonyl-[protein] + ATP = O-phospho-L-threonyl-[protein] + ADP + H(+). Serine kinase that plays an essential role in the NF-kappa-B signaling pathway which is activated by multiple stimuli such as inflammatory cytokines, bacterial or viral products, DNA damages or other cellular stresses. Acts as a part of the canonical IKK complex in the conventional pathway of NF-kappa-B activation. Phosphorylates inhibitors of NF-kappa-B on 2 critical serine residues. These modifications allow polyubiquitination of the inhibitors and subsequent degradation by the proteasome. In turn, free NF-kappa-B is translocated into the nucleus and activates the transcription of hundreds of genes involved in immune response, growth control, or protection against apoptosis. In addition to the NF-kappa-B inhibitors, phosphorylates several other components of the signaling pathway including NEMO/IKBKG, NF-kappa-B subunits RELA and NFKB1, as well as IKK-related kinases TBK1 and IKBKE. IKK-related kinase phosphorylations may prevent the overproduction of inflammatory mediators since they exert a negative regulation on canonical IKKs. Phosphorylates FOXO3, mediating the TNF-dependent inactivation of this pro-apoptotic transcription factor. Also phosphorylates other substrates including NAA10, NCOA3, BCL10 and IRS1. Phosphorylates RIPK1 at 'Ser-25' which represses its kinase activity and consequently prevents TNF-mediated RIPK1-dependent cell death. Phosphorylates the C-terminus of IRF5, stimulating IRF5 homodimerization and translocation into the nucleus. Following bacterial lipopolysaccharide (LPS)-induced TLR4 endocytosis, phosphorylates STAT1 at 'Thr-748' which restricts interferon signaling and anti-inflammatory responses and promotes innate inflammatory responses. IKBKB-mediated phosphorylation of STAT1 at 'Thr-748' promotes binding of STAT1 to the ARID5A promoter, resulting in transcriptional activation of ARID5A and subsequent ARID5A-mediated stabilization of IL6. It also promotes binding of STAT1 to the IL12B promoter and activation of IL12B transcription. In Mus musculus (Mouse), this protein is Inhibitor of nuclear factor kappa-B kinase subunit beta (Ikbkb).